A 432-amino-acid chain; its full sequence is Glutamyl-tRNA reductase (432 aa).

Substrate is bound by residues 55–58, S114, 119–121, and Q125; these read TCNR and ETQ. Catalysis depends on C56, which acts as the Nucleophile. 194–199 is an NADP(+) binding site; that stretch reads GAGEMI.

It belongs to the glutamyl-tRNA reductase family. In terms of assembly, homodimer.

The catalysed reaction is (S)-4-amino-5-oxopentanoate + tRNA(Glu) + NADP(+) = L-glutamyl-tRNA(Glu) + NADPH + H(+). It functions in the pathway porphyrin-containing compound metabolism; protoporphyrin-IX biosynthesis; 5-aminolevulinate from L-glutamyl-tRNA(Glu): step 1/2. Functionally, catalyzes the NADPH-dependent reduction of glutamyl-tRNA(Glu) to glutamate 1-semialdehyde (GSA). The polypeptide is Glutamyl-tRNA reductase (Burkholderia orbicola (strain AU 1054)).